Reading from the N-terminus, the 295-residue chain is Glutamyl-Q tRNA(Asp) synthetase (295 aa).

Residues 5–9 and Glu41 each bind L-glutamate; that span reads RFAPS. Positions 8–18 match the 'HIGH' region motif; it reads PSPTGLLHIGS. Zn(2+) contacts are provided by Cys97, Cys99, Tyr117, and Cys121. L-glutamate-binding residues include Tyr178 and Arg196. The 'KMSKS' region motif lies at 234 to 238; the sequence is KWSKQ. Lys237 contacts ATP.

This sequence belongs to the class-I aminoacyl-tRNA synthetase family. GluQ subfamily. The cofactor is Zn(2+).

Its function is as follows. Catalyzes the tRNA-independent activation of glutamate in presence of ATP and the subsequent transfer of glutamate onto a tRNA(Asp). Glutamate is transferred on the 2-amino-5-(4,5-dihydroxy-2-cyclopenten-1-yl) moiety of the queuosine in the wobble position of the QUC anticodon. This chain is Glutamyl-Q tRNA(Asp) synthetase, found in Neisseria gonorrhoeae (strain ATCC 700825 / FA 1090).